Reading from the N-terminus, the 63-residue chain is MNAVDLRAKSVEELNAELVSLLREQFNLRMQAATGQLQQTHNLKAVRRDIARVKTVLTEKAGA.

Belongs to the universal ribosomal protein uL29 family.

The chain is Large ribosomal subunit protein uL29 from Photobacterium profundum (strain SS9).